A 40-amino-acid polypeptide reads, in one-letter code: Natriuretic peptide PpNP-a (40 aa).

Positions 1–8 (SGSKTANI) are excised as a propeptide. Residues 1-40 (SGSKTANIGDGCFGVPIDHIGSTSGMGCGSPRPKPTPGGS) form a disordered region. The cysteines at positions 12 and 28 are disulfide-linked.

It belongs to the natriuretic peptide family. Expressed by the venom gland.

It is found in the secreted. Its function is as follows. Snake venom natriuretic peptide that targets both NPR1 and NPR2. Exhibits hypotensive and vasodepressor activities. The polypeptide is Natriuretic peptide PpNP-a (Pseudechis porphyriacus (Red-bellied black snake)).